A 163-amino-acid polypeptide reads, in one-letter code: ECF RNA polymerase sigma factor SigM (163 aa).

Positions 30–43 match the Polymerase core binding motif; sequence DLLQETFMRAYIHI. The segment at residues 127–146 is a DNA-binding region (H-T-H motif); sequence YKEASHIMNISEANFKSVLF.

It belongs to the sigma-70 factor family. ECF subfamily. As to quaternary structure, interacts with the N-terminus of YhdL, which is probably its anti-sigma factor. Interacts transiently with the RNAP core.

Its function is as follows. Sigma factors are initiation factors that promote the attachment of RNA polymerase (RNAP) to specific initiation sites and are then released. Extracytoplasmic function (ECF) sigma factors are held in an inactive form by a cognate anti-sigma factor (YhdL) until released. This sigma factor is involved in the maintenance of membrane and cell wall integrity in response to environmental stresses including salt, acid, ethanol and antibiotics stress. Partially regulates transcription from a number of genes including disA. Associates with RNAP core under all growth phases. The sequence is that of ECF RNA polymerase sigma factor SigM (sigM) from Bacillus subtilis (strain 168).